A 77-amino-acid chain; its full sequence is Protein ImpC (77 aa).

The protein belongs to the DinI family.

The protein is Protein ImpC (impC) of Salmonella typhimurium.